Reading from the N-terminus, the 273-residue chain is 4-hydroxy-tetrahydrodipicolinate reductase (273 aa).

Residues 12–17 (GAGGRM) and glutamate 38 each bind NAD(+). Position 39 (arginine 39) interacts with NADP(+). NAD(+) is bound by residues 102-104 (GTT) and 126-129 (AANF). The active-site Proton donor/acceptor is the histidine 159. Histidine 160 provides a ligand contact to (S)-2,3,4,5-tetrahydrodipicolinate. The active-site Proton donor is lysine 163. Residue 169–170 (GT) participates in (S)-2,3,4,5-tetrahydrodipicolinate binding.

Belongs to the DapB family. Homotetramer.

Its subcellular location is the cytoplasm. It carries out the reaction (S)-2,3,4,5-tetrahydrodipicolinate + NAD(+) + H2O = (2S,4S)-4-hydroxy-2,3,4,5-tetrahydrodipicolinate + NADH + H(+). The enzyme catalyses (S)-2,3,4,5-tetrahydrodipicolinate + NADP(+) + H2O = (2S,4S)-4-hydroxy-2,3,4,5-tetrahydrodipicolinate + NADPH + H(+). Its pathway is amino-acid biosynthesis; L-lysine biosynthesis via DAP pathway; (S)-tetrahydrodipicolinate from L-aspartate: step 4/4. In terms of biological role, catalyzes the conversion of 4-hydroxy-tetrahydrodipicolinate (HTPA) to tetrahydrodipicolinate. The sequence is that of 4-hydroxy-tetrahydrodipicolinate reductase from Yersinia pseudotuberculosis serotype O:1b (strain IP 31758).